The primary structure comprises 76 residues: Antimicrobial peptide Smp24 (76 aa).

A signal peptide spans 1–22; it reads MQYKTFLVIFMAYLLVTHEAEA. A propeptide spanning residues 47 to 76 is cleaved from the precursor; it reads SKRKRDVEDFFDPYQRDLDLELERLLSQLQ.

This sequence belongs to the non-disulfide-bridged peptide (NDBP) superfamily. Medium-length antimicrobial peptide (group 3) family. In terms of tissue distribution, expressed by the venom gland.

The protein resides in the secreted. It localises to the target cell membrane. In terms of biological role, peptide that shows antimicrobial activity, moderate cytolysis on eukaryote cells and interference with DNA synthesis. Has potent activity against Gram-positive bacteria and moderate activity against Gram-negative bacteria, as well as moderate activity against fungi. Acts by inducing bacterial membrane disruption. Uses multiple modes of action depending on the membrane lipid composition. Uses a toroidal pore mechanism against the prokaryotic like membrane and forms hexagonal phase non-lamellar structures in eukaryotic-like membrane. Shows activity against B.subtilis (MIC=4 ug/ml), S.epidermidis (MIC=8 ug/ml), S.aureus (MIC=8 ug/ml), E.coli (MIC=64 ug/ml), K.pneumoniae (MIC=128 ug/ml), P.aeruginosa (MIC=256 ug/ml), and C.albicans (MIC=32 ug/ml). Shows moderate hemolysis activity. The protein is Antimicrobial peptide Smp24 of Scorpio palmatus (Israeli golden scorpion).